A 68-amino-acid chain; its full sequence is Protein transport protein Sec61 subunit gamma (68 aa).

Residues Met1–Glu32 are Cytoplasmic-facing. Residues Phe33–Ile61 traverse the membrane as a helical segment. At Asn62–Ser68 the chain is on the extracellular side.

This sequence belongs to the SecE/SEC61-gamma family. Heterotrimeric complex composed of SEC61-alpha, SEC61-beta and SEC61-gamma. Component of the ribosome-associated ER translocon complex.

The protein resides in the endoplasmic reticulum membrane. Functionally, necessary for protein translocation in the endoplasmic reticulum and multi-pass membrane protein biogenesis. This Ciona intestinalis (Transparent sea squirt) protein is Protein transport protein Sec61 subunit gamma (SEC61G).